Here is a 373-residue protein sequence, read N- to C-terminus: Lipoyl amidotransferase LIPT1, mitochondrial (373 aa).

Residues 1 to 25 (MLIPLSMKNCFRLLCQHKVPAAGFK) constitute a mitochondrion transit peptide. Residues 57–243 (LEGKPILFLW…EYAAHHQVDG (187 aa)) form the BPL/LPL catalytic domain. (R)-lipoyl-5'-AMP contacts are provided by Y107, K151, K161, and T179.

This sequence belongs to the LplA family.

Its subcellular location is the mitochondrion. The enzyme catalyses (R)-lipoyl-5'-AMP + L-lysyl-[lipoyl-carrier protein] = N(6)-[(R)-lipoyl]-L-lysyl-[lipoyl-carrier protein] + AMP + 2 H(+). It carries out the reaction N(6)-[(R)-lipoyl]-L-lysyl-[glycine-cleavage complex H protein] + L-lysyl-[lipoyl-carrier protein] = L-lysyl-[glycine-cleavage complex H protein] + N(6)-[(R)-lipoyl]-L-lysyl-[lipoyl-carrier protein]. It functions in the pathway protein modification; protein lipoylation via exogenous pathway; protein N(6)-(lipoyl)lysine from lipoate: step 2/2. Its function is as follows. Lipoyl amidotransferase that catalyzes the transfer of lipoyl moieties from lipoyl-protein H of the glycine cleavage system (lipoyl-GCSH) to E2 subunits of the pyruvate dehydrogenase complex (PDCE2). Unable to catalyze the transfer of octanoyl from octanoyl-GCSH to PDCE2. In vitro, it is also able to catalyze the transfer of the lipoyl group from lipoyl-AMP to the specific lysine residue of lipoyl domains of lipoate-dependent enzymes but this reaction may not be physiologically relevant. The protein is Lipoyl amidotransferase LIPT1, mitochondrial of Mus musculus (Mouse).